The following is a 525-amino-acid chain: M-phase inducer phosphatase 1 (525 aa).

Residues 1–42 (MELGPEPPHRRRLLFTCSPTPAPQPTGKVQFGASRAGGLSPV) form a disordered region. The Phosphodegron signature appears at 74–84 (MGSSESTDSGF). Phosphoserine; by CHEK1 is present on S76. Residues S79, S82, and S88 each carry the phosphoserine; by NEK11 modification. S124 is subject to Phosphoserine; by CHEK1 and CHEK2. The KEN box motif lies at 141–143 (KEN). Position 178 is a phosphoserine; by CHEK1 (S178). The segment at 260 to 318 (FDSPSPCSSTSSCSTRAVKRADRSHEESPRGTKRRKSSEASPVKADVPEPTQLPHQSLS) is disordered. Positions 262 to 274 (SPSPCSSTSSCST) are enriched in low complexity. Residues 278–289 (KRADRSHEESPR) show a composition bias toward basic and acidic residues. Phosphoserine; by CHEK1 and CHEK2 occurs at positions 283 and 296. Residues 377–483 (LIKEFVIIDC…FFLKCQSHCE (107 aa)) form the Rhodanese domain. C432 is a catalytic residue. T508 carries the phosphothreonine; by CHEK1 modification. A phosphoserine; by PLK3 mark is found at S514 and S520.

It belongs to the MPI phosphatase family. In terms of assembly, interacts with CCNB1/cyclin B1. Interacts with YWHAE/14-3-3 epsilon when phosphorylated. Interacts with CUL1 specifically when CUL1 is neddylated and active. Interacts with BTRC/BTRCP1 and FBXW11/BTRCP2. Interactions with CUL1, BTRC and FBXW11 are enhanced upon DNA damage. Interacts with CHEK2; mediates CDC25A phosphorylation and degradation in response to infrared-induced DNA damages. Interacts with HSP90AB1; prevents heat shock-mediated CDC25A degradation and contributes to cell cycle progression. Phosphorylated by CHEK1 on Ser-76, Ser-124, Ser-178, Ser-283, Ser-296 and Thr-508 during checkpoint mediated cell cycle arrest. Also phosphorylated by CHEK2 on Ser-124, Ser-283, and Ser-296 during checkpoint mediated cell cycle arrest. Phosphorylation on Ser-178 and Thr-508 creates binding sites for YWHAE/14-3-3 epsilon which inhibits CDC25A. Phosphorylation on Ser-76, Ser-124, Ser-178, Ser-283 and Ser-296 may also promote ubiquitin-dependent proteolysis of CDC25A by the SCF complex. Phosphorylation of CDC25A at Ser-76 by CHEK1 primes it for subsequent phosphorylation at Ser-79, Ser-82 and Ser-88 by NEK11. Phosphorylation by NEK11 is required for BTRC-mediated polyubiquitination and degradation. Phosphorylation by PIM1 leads to an increase in phosphatase activity. Phosphorylated by PLK3 following DNA damage, leading to promote its ubiquitination and degradation. Post-translationally, ubiquitinated by the anaphase promoting complex/cyclosome (APC/C) ubiquitin ligase complex that contains FZR1/CDH1 during G1 phase leading to its degradation by the proteasome. Ubiquitinated by a SCF complex containing BTRC and FBXW11 during S phase leading to its degradation by the proteasome. Deubiquitination by USP17L2/DUB3 leads to its stabilization.

The enzyme catalyses O-phospho-L-tyrosyl-[protein] + H2O = L-tyrosyl-[protein] + phosphate. With respect to regulation, stimulated by B-type cyclins. Stimulated by PIM1-mediated phosphorylation. Tyrosine protein phosphatase which functions as a dosage-dependent inducer of mitotic progression. Directly dephosphorylates CDK1 and stimulates its kinase activity. Also dephosphorylates CDK2 in complex with cyclin-E, in vitro. This chain is M-phase inducer phosphatase 1 (Cdc25a), found in Rattus norvegicus (Rat).